A 608-amino-acid chain; its full sequence is ATP-citrate synthase beta chain protein 2 (608 aa).

ATP-binding positions include 214 to 234 (ILRF…ELGG) and 265 to 291 (FKSE…KNQA). Glu-231 is a binding site for Mg(2+). The active-site Tele-phosphohistidine intermediate is His-273. 292 to 302 (LIDAGAIVPTS) provides a ligand contact to CoA.

The protein belongs to the succinate/malate CoA ligase alpha subunit family. Heterooctamer of 4 alpha and 4 beta chains. Expressed in trichomes, epidermal leaf cells, anther tapetal cells, stigma and in young vascular bundles of expanding leaves, cotyledons, roots, pedicel of flowers and siliques.

Its subcellular location is the cytoplasm. It is found in the cytosol. It catalyses the reaction oxaloacetate + acetyl-CoA + ADP + phosphate = citrate + ATP + CoA. ATP citrate-lyase is the primary enzyme responsible for the synthesis of cytosolic acetyl-CoA, used for the elongation of fatty acids and biosynthesis of isoprenoids, flavonoids and malonated derivatives. May supply substrate to the cytosolic acetyl-CoA carboxylase, which generates the malonyl-CoA used for the synthesis of a multitude of compounds, including very long chain fatty acids and flavonoids. Required for normal growth and development and elongation of C18 fatty acids to C20 to C24 fatty acids in seeds. n contrast to all known animal ACL enzymes having a homomeric structure, plant ACLs are composed of alpha and beta chains. This Arabidopsis thaliana (Mouse-ear cress) protein is ATP-citrate synthase beta chain protein 2.